The chain runs to 536 residues: L-aspartate oxidase 2 (536 aa).

FAD contacts are provided by residues 22 to 25 (EGLA) and 51 to 58 (SSYWAQGG). The Proton donor/acceptor role is filled by Arg-284. FAD contacts are provided by residues Glu-369 and 385 to 386 (SL).

It belongs to the FAD-dependent oxidoreductase 2 family. NadB subfamily. Requires FAD as cofactor.

Its subcellular location is the cytoplasm. The enzyme catalyses L-aspartate + O2 = iminosuccinate + H2O2. The protein operates within cofactor biosynthesis; NAD(+) biosynthesis; iminoaspartate from L-aspartate (oxidase route): step 1/1. Catalyzes the oxidation of L-aspartate to iminoaspartate, the first step in the de novo biosynthesis of NAD(+). In Ralstonia nicotianae (strain ATCC BAA-1114 / GMI1000) (Ralstonia solanacearum), this protein is L-aspartate oxidase 2 (nadB2).